The chain runs to 434 residues: Eukaryotic peptide chain release factor subunit 1-1 (434 aa).

The protein belongs to the eukaryotic release factor 1 family. As to quaternary structure, heterodimer of two subunits, one of which binds GTP.

Its subcellular location is the cytoplasm. Functionally, directs the termination of nascent peptide synthesis (translation) in response to the termination codons UAA, UAG and UGA. Modulates plant growth and development. In Brassica oleracea var. botrytis (Cauliflower), this protein is Eukaryotic peptide chain release factor subunit 1-1.